Here is a 230-residue protein sequence, read N- to C-terminus: Large ribosomal subunit protein uL1 (230 aa).

The protein belongs to the universal ribosomal protein uL1 family. Part of the 50S ribosomal subunit.

Its function is as follows. Binds directly to 23S rRNA. The L1 stalk is quite mobile in the ribosome, and is involved in E site tRNA release. Functionally, protein L1 is also a translational repressor protein, it controls the translation of the L11 operon by binding to its mRNA. The chain is Large ribosomal subunit protein uL1 from Bradyrhizobium diazoefficiens (strain JCM 10833 / BCRC 13528 / IAM 13628 / NBRC 14792 / USDA 110).